We begin with the raw amino-acid sequence, 362 residues long: sn-glycerol-3-phosphate import ATP-binding protein UgpC (362 aa).

The 232-residue stretch at 4-235 folds into the ABC transporter domain; it reads LTLQSVKKTY…PATVFVASFI (232 aa). An ATP-binding site is contributed by 37–44; it reads GPSGCGKS.

Belongs to the ABC transporter superfamily. sn-glycerol-3-phosphate importer (TC 3.A.1.1.3) family. The complex is composed of two ATP-binding proteins (UgpC), two transmembrane proteins (UgpA and UgpE) and a solute-binding protein (UgpB).

The protein resides in the cell inner membrane. The catalysed reaction is sn-glycerol 3-phosphate(out) + ATP + H2O = sn-glycerol 3-phosphate(in) + ADP + phosphate + H(+). In terms of biological role, part of the ABC transporter complex UgpBAEC involved in sn-glycerol-3-phosphate (G3P) import. Responsible for energy coupling to the transport system. In Paraburkholderia xenovorans (strain LB400), this protein is sn-glycerol-3-phosphate import ATP-binding protein UgpC.